The primary structure comprises 160 residues: Deoxyuridine 5'-triphosphate nucleotidohydrolase (160 aa).

Substrate is bound by residues 79–81 (RSG), Asn-92, 96–98 (TVD), and Lys-106.

The protein belongs to the dUTPase family. The cofactor is Mg(2+).

The catalysed reaction is dUTP + H2O = dUMP + diphosphate + H(+). The protein operates within pyrimidine metabolism; dUMP biosynthesis; dUMP from dCTP (dUTP route): step 2/2. Its function is as follows. This enzyme is involved in nucleotide metabolism: it produces dUMP, the immediate precursor of thymidine nucleotides and it decreases the intracellular concentration of dUTP so that uracil cannot be incorporated into DNA. This is Deoxyuridine 5'-triphosphate nucleotidohydrolase from Sinorhizobium medicae (strain WSM419) (Ensifer medicae).